The following is a 229-amino-acid chain: Small ribosomal subunit protein uS3 (229 aa).

Positions 39 to 109 (MRKYIKEQLM…QVNIDIVEIR (71 aa)) constitute a KH type-2 domain. The tract at residues 210-229 (VVSQQNSRPSGPRGPRRPRA) is disordered.

It belongs to the universal ribosomal protein uS3 family. In terms of assembly, part of the 30S ribosomal subunit. Forms a tight complex with proteins S10 and S14.

Its function is as follows. Binds the lower part of the 30S subunit head. Binds mRNA in the 70S ribosome, positioning it for translation. This Akkermansia muciniphila (strain ATCC BAA-835 / DSM 22959 / JCM 33894 / BCRC 81048 / CCUG 64013 / CIP 107961 / Muc) protein is Small ribosomal subunit protein uS3.